Consider the following 250-residue polypeptide: NAD-dependent protein deacylase 1 (250 aa).

Residues 1–250 (MRAVVELLAG…PELLRRAFPG (250 aa)) enclose the Deacetylase sirtuin-type domain. NAD(+) is bound at residue 19–39 (GAGVSAESGIPTFRDALGGLW). Residues Y64 and R67 each coordinate substrate. 98–101 (QNVD) contributes to the NAD(+) binding site. Residue H116 is the Proton acceptor of the active site. The Zn(2+) site is built by C124, C127, C152, and C155. NAD(+) is bound by residues 192 to 194 (GTS), 218 to 220 (NPQ), and A236.

The protein belongs to the sirtuin family. Class III subfamily. Zn(2+) is required as a cofactor.

The protein localises to the cytoplasm. The catalysed reaction is N(6)-acetyl-L-lysyl-[protein] + NAD(+) + H2O = 2''-O-acetyl-ADP-D-ribose + nicotinamide + L-lysyl-[protein]. It catalyses the reaction N(6)-succinyl-L-lysyl-[protein] + NAD(+) + H2O = 2''-O-succinyl-ADP-D-ribose + nicotinamide + L-lysyl-[protein]. In terms of biological role, NAD-dependent lysine deacetylase and desuccinylase that specifically removes acetyl and succinyl groups on target proteins. Modulates the activities of several proteins which are inactive in their acylated form. The sequence is that of NAD-dependent protein deacylase 1 from Pseudomonas aeruginosa (strain ATCC 15692 / DSM 22644 / CIP 104116 / JCM 14847 / LMG 12228 / 1C / PRS 101 / PAO1).